A 398-amino-acid polypeptide reads, in one-letter code: Phosphoglycerate kinase (398 aa).

Residues 21–23 (DFN), Arg36, 59–62 (HLGR), Arg119, and Arg157 each bind substrate. ATP-binding positions include Lys208, Gly296, Glu327, and 354–357 (GGDS).

This sequence belongs to the phosphoglycerate kinase family. Monomer.

It localises to the cytoplasm. The catalysed reaction is (2R)-3-phosphoglycerate + ATP = (2R)-3-phospho-glyceroyl phosphate + ADP. Its pathway is carbohydrate degradation; glycolysis; pyruvate from D-glyceraldehyde 3-phosphate: step 2/5. The sequence is that of Phosphoglycerate kinase from Lactococcus lactis subsp. cremoris (strain MG1363).